Reading from the N-terminus, the 369-residue chain is Delta(6)-protoilludene synthase STEHIDRAFT_73029 (369 aa).

Mg(2+)-binding residues include aspartate 107, asparagine 243, serine 247, and glutamate 251. The short motif at 107–111 is the D(D/E)XX(D/E) motif element; sequence DEYSD. The short motif at 243-251 is the NSE motif element; the sequence is NDIVSYNLE. 2 residues coordinate (2E,6E)-farnesyl diphosphate: arginine 333 and tyrosine 334.

It belongs to the terpene synthase family. The cofactor is Mg(2+). It depends on Mn(2+) as a cofactor. Ca(2+) serves as cofactor. Ni(2+) is required as a cofactor. Requires Co(2+) as cofactor.

It carries out the reaction (2E,6E)-farnesyl diphosphate = Delta(6)-protoilludene + diphosphate. The catalysed reaction is (2E,6E)-farnesyl diphosphate = alpha-selinene + diphosphate. Its activity is regulated as follows. Ca(2+) switches the cyclization mechanism of delta(6)-protoilludene synthase from 1,11 to 1,10 cyclization which leads to the production of beta-elemene. Its function is as follows. Terpene cyclase that catalyzes the cyclization of farnesyl diphosphate (FPP) to delta(6)-protoilludene. In presence of Ca(2+), a significant switch from 1,11 to a dual 1,11/1,10 cyclization occurs, producing beta-elemene as the major product, with lower levels of delta(6)-protoilludene and (E)-beta-caryophyllene, and traces of beta-selinene and alpha-selinene. In Stereum hirsutum (strain FP-91666) (White-rot fungus), this protein is Delta(6)-protoilludene synthase STEHIDRAFT_73029.